A 129-amino-acid chain; its full sequence is Histone H2A (129 aa).

Belongs to the histone H2A family. The nucleosome is a histone octamer containing two molecules each of H2A, H2B, H3 and H4 assembled in one H3-H4 heterotetramer and two H2A-H2B heterodimers. The octamer wraps approximately 147 bp of DNA.

It is found in the nucleus. The protein localises to the chromosome. Core component of nucleosome. Nucleosomes wrap and compact DNA into chromatin, limiting DNA accessibility to the cellular machineries which require DNA as a template. Histones thereby play a central role in transcription regulation, DNA repair, DNA replication and chromosomal stability. DNA accessibility is regulated via a complex set of post-translational modifications of histones, also called histone code, and nucleosome remodeling. The polypeptide is Histone H2A (H2A-II) (Chlamydomonas reinhardtii (Chlamydomonas smithii)).